The primary structure comprises 283 residues: Fructose-1,6-bisphosphatase class 1 (283 aa).

Residues Glu-67, Asp-86, Leu-88, and Asp-89 each contribute to the Mg(2+) site. Residues 89-92, Tyr-195, and Lys-225 each bind substrate; that span reads DGSS. Mg(2+) is bound at residue Glu-231.

It belongs to the FBPase class 1 family. Homotetramer. The cofactor is Mg(2+).

Its subcellular location is the cytoplasm. It catalyses the reaction beta-D-fructose 1,6-bisphosphate + H2O = beta-D-fructose 6-phosphate + phosphate. Its pathway is carbohydrate biosynthesis; gluconeogenesis. This chain is Fructose-1,6-bisphosphatase class 1, found in Natronomonas pharaonis (strain ATCC 35678 / DSM 2160 / CIP 103997 / JCM 8858 / NBRC 14720 / NCIMB 2260 / Gabara) (Halobacterium pharaonis).